We begin with the raw amino-acid sequence, 279 residues long: Biotin synthase (279 aa).

One can recognise a Radical SAM core domain in the interval 1 to 228; the sequence is MKDIFLCSIC…SARLMIAGGR (228 aa). Positions 17, 21, and 24 each coordinate [4Fe-4S] cluster. [2Fe-2S] cluster contacts are provided by cysteine 61, cysteine 96, cysteine 154, and arginine 221.

The protein belongs to the radical SAM superfamily. Biotin synthase family. In terms of assembly, homodimer. It depends on [4Fe-4S] cluster as a cofactor. Requires [2Fe-2S] cluster as cofactor.

The enzyme catalyses (4R,5S)-dethiobiotin + (sulfur carrier)-SH + 2 reduced [2Fe-2S]-[ferredoxin] + 2 S-adenosyl-L-methionine = (sulfur carrier)-H + biotin + 2 5'-deoxyadenosine + 2 L-methionine + 2 oxidized [2Fe-2S]-[ferredoxin]. It participates in cofactor biosynthesis; biotin biosynthesis; biotin from 7,8-diaminononanoate: step 2/2. Its function is as follows. Catalyzes the conversion of dethiobiotin (DTB) to biotin by the insertion of a sulfur atom into dethiobiotin via a radical-based mechanism. The chain is Biotin synthase from Wolinella succinogenes (strain ATCC 29543 / DSM 1740 / CCUG 13145 / JCM 31913 / LMG 7466 / NCTC 11488 / FDC 602W) (Vibrio succinogenes).